Consider the following 153-residue polypeptide: Deoxyuridine 5'-triphosphate nucleotidohydrolase (153 aa).

Residues 71 to 73, N84, 88 to 90, and K98 contribute to the substrate site; these read RSG and TID.

Belongs to the dUTPase family. Requires Mg(2+) as cofactor.

The enzyme catalyses dUTP + H2O = dUMP + diphosphate + H(+). It functions in the pathway pyrimidine metabolism; dUMP biosynthesis; dUMP from dCTP (dUTP route): step 2/2. In terms of biological role, this enzyme is involved in nucleotide metabolism: it produces dUMP, the immediate precursor of thymidine nucleotides and it decreases the intracellular concentration of dUTP so that uracil cannot be incorporated into DNA. The protein is Deoxyuridine 5'-triphosphate nucleotidohydrolase of Wolbachia pipientis subsp. Culex pipiens (strain wPip).